The primary structure comprises 282 residues: Nucleotide-binding protein Fnod_1159 (282 aa).

ATP is bound at residue 9–16; sequence GHSGAGKS. Residue 57–60 coordinates GTP; the sequence is DIRS.

It belongs to the RapZ-like family.

In terms of biological role, displays ATPase and GTPase activities. The sequence is that of Nucleotide-binding protein Fnod_1159 from Fervidobacterium nodosum (strain ATCC 35602 / DSM 5306 / Rt17-B1).